The sequence spans 891 residues: uncharacterized protein (891 aa).

Over residues 48–64 (GHKKPRSESRKKYDAKK) the composition is skewed to basic and acidic residues. The disordered stretch occupies residues 48-86 (GHKKPRSESRKKYDAKKQHQSSHFATPVKGVESSEPTEK). Phosphoserine occurs at positions 261, 263, 265, and 268. Residues 795 to 822 (QRTFSNESPRAVDSGFSRTSTPFSESTS) are disordered. Positions 810 to 822 (FSRTSTPFSESTS) are enriched in polar residues.

It localises to the nucleus. This is an uncharacterized protein from Schizosaccharomyces pombe (strain 972 / ATCC 24843) (Fission yeast).